We begin with the raw amino-acid sequence, 135 residues long: Large ribosomal subunit protein uL16c (135 aa).

This sequence belongs to the universal ribosomal protein uL16 family. Part of the 50S ribosomal subunit.

The protein resides in the plastid. It is found in the chloroplast. This Oenothera argillicola (Appalachian evening primrose) protein is Large ribosomal subunit protein uL16c.